The following is a 264-amino-acid chain: Glutamate racemase 2 (264 aa).

Substrate-binding positions include aspartate 10 to serine 11 and tyrosine 42 to glycine 43. Residue cysteine 73 is the Proton donor/acceptor of the active site. Asparagine 74–threonine 75 is a binding site for substrate. Cysteine 181 serves as the catalytic Proton donor/acceptor. Threonine 182–histidine 183 contacts substrate.

The protein belongs to the aspartate/glutamate racemases family.

It catalyses the reaction L-glutamate = D-glutamate. It functions in the pathway cell wall biogenesis; peptidoglycan biosynthesis. Provides the (R)-glutamate required for cell wall biosynthesis. This chain is Glutamate racemase 2, found in Caldanaerobacter subterraneus subsp. tengcongensis (strain DSM 15242 / JCM 11007 / NBRC 100824 / MB4) (Thermoanaerobacter tengcongensis).